Reading from the N-terminus, the 458-residue chain is tRNA modification GTPase MnmE (458 aa).

The (6S)-5-formyl-5,6,7,8-tetrahydrofolate site is built by R26, E88, and R127. The region spanning 224–378 is the TrmE-type G domain; the sequence is GLSTAIIGRP…IEDRINQLFF (155 aa). N234 contributes to the K(+) binding site. Residues 234–239, 253–259, and 278–281 each bind GTP; these read NVGKSS, TDIAGTT, and DTAG. Residue S238 coordinates Mg(2+). T253, I255, and T258 together coordinate K(+). T259 contributes to the Mg(2+) binding site. K458 provides a ligand contact to (6S)-5-formyl-5,6,7,8-tetrahydrofolate.

Belongs to the TRAFAC class TrmE-Era-EngA-EngB-Septin-like GTPase superfamily. TrmE GTPase family. As to quaternary structure, homodimer. Heterotetramer of two MnmE and two MnmG subunits. K(+) serves as cofactor.

It localises to the cytoplasm. Exhibits a very high intrinsic GTPase hydrolysis rate. Involved in the addition of a carboxymethylaminomethyl (cmnm) group at the wobble position (U34) of certain tRNAs, forming tRNA-cmnm(5)s(2)U34. In Streptococcus pyogenes serotype M6 (strain ATCC BAA-946 / MGAS10394), this protein is tRNA modification GTPase MnmE.